Here is a 486-residue protein sequence, read N- to C-terminus: MTFQAIATHPQDWTGDTLALGLTTAAIGETLSSELQKLDQQWNGVLQELISDSEFKAKLAETTTTRIGGSIRKLILVGLGESPTTEDYRRAAAAVAKQARSFKSQTLAIAFPPSDDPAAIASAIVEGISLALYKDQRFKSEPDTASGPSSIELLGLAGQEAAIARAEQVVAGVELARQLVAAPANVVTPVTMADTAQELAAELGLELEILEADECEKRGMGAVLGVAKASDLPPKFIHLTYRPESTPRRKLAIVGKGLTFDSGGYNIKGAGSGIEMMKTDMGGAAATLGAAKAIGLIKPDVEVHFISPVTENMISGRGMHPGDILTASNGKTIEVNNTDAEGRLTLADALVFADGLGVDAIVDLATLTGACIIALGDDIAGLWSPSDDLAEQLLQAGKAAGEKLWRLPLEEPYLDGLKSPVADYKNTGPRAGGSITAALFLKQFVKHPVWAHLDVAGPVWSDKEKHYNPAGATGYGVRTLVNWVLS.

K256 and D261 together coordinate Mn(2+). The active site involves K268. Mn(2+) is bound by residues D280, D339, and E341. The active site involves R343.

It belongs to the peptidase M17 family. The cofactor is Mn(2+).

Its subcellular location is the cytoplasm. It catalyses the reaction Release of an N-terminal amino acid, Xaa-|-Yaa-, in which Xaa is preferably Leu, but may be other amino acids including Pro although not Arg or Lys, and Yaa may be Pro. Amino acid amides and methyl esters are also readily hydrolyzed, but rates on arylamides are exceedingly low.. It carries out the reaction Release of an N-terminal amino acid, preferentially leucine, but not glutamic or aspartic acids.. Presumably involved in the processing and regular turnover of intracellular proteins. Catalyzes the removal of unsubstituted N-terminal amino acids from various peptides. The sequence is that of Probable cytosol aminopeptidase from Synechococcus sp. (strain ATCC 27144 / PCC 6301 / SAUG 1402/1) (Anacystis nidulans).